Reading from the N-terminus, the 283-residue chain is Diaminopimelate epimerase (283 aa).

Asparagine 13, glutamine 45, and asparagine 65 together coordinate substrate. Residue cysteine 74 is the Proton donor of the active site. Substrate contacts are provided by residues glycine 75–asparagine 76, asparagine 156, asparagine 190, and glutamate 208–arginine 209. The active-site Proton acceptor is cysteine 217. Glycine 218–serine 219 contributes to the substrate binding site.

This sequence belongs to the diaminopimelate epimerase family. As to quaternary structure, homodimer.

The protein localises to the cytoplasm. The enzyme catalyses (2S,6S)-2,6-diaminopimelate = meso-2,6-diaminopimelate. Its pathway is amino-acid biosynthesis; L-lysine biosynthesis via DAP pathway; DL-2,6-diaminopimelate from LL-2,6-diaminopimelate: step 1/1. Functionally, catalyzes the stereoinversion of LL-2,6-diaminopimelate (L,L-DAP) to meso-diaminopimelate (meso-DAP), a precursor of L-lysine and an essential component of the bacterial peptidoglycan. The polypeptide is Diaminopimelate epimerase (Bartonella quintana (strain Toulouse) (Rochalimaea quintana)).